The chain runs to 174 residues: Methylated-DNA--protein-cysteine methyltransferase (174 aa).

Cysteine 141 acts as the Nucleophile; methyl group acceptor in catalysis.

Belongs to the MGMT family.

Its subcellular location is the cytoplasm. It carries out the reaction a 6-O-methyl-2'-deoxyguanosine in DNA + L-cysteinyl-[protein] = S-methyl-L-cysteinyl-[protein] + a 2'-deoxyguanosine in DNA. The enzyme catalyses a 4-O-methyl-thymidine in DNA + L-cysteinyl-[protein] = a thymidine in DNA + S-methyl-L-cysteinyl-[protein]. In terms of biological role, involved in the cellular defense against the biological effects of O6-methylguanine (O6-MeG) and O4-methylthymine (O4-MeT) in DNA. Repairs the methylated nucleobase in DNA by stoichiometrically transferring the methyl group to a cysteine residue in the enzyme. This is a suicide reaction: the enzyme is irreversibly inactivated. The polypeptide is Methylated-DNA--protein-cysteine methyltransferase (Thermococcus gammatolerans (strain DSM 15229 / JCM 11827 / EJ3)).